The following is a 163-amino-acid chain: Interleukin-31 (163 aa).

Positions 1-23 (MIFHTGTTKPTLVLLCCIGTWLA) are cleaved as a signal peptide. N-linked (GlcNAc...) asparagine glycosylation is found at Asn-55, Asn-84, and Asn-124.

The protein resides in the secreted. Its function is as follows. Activates STAT3 and possibly STAT1 and STAT5 through the IL31 heterodimeric receptor composed of IL31RA and OSMR. May function in skin immunity. Enhances myeloid progenitor cell survival in vitro. Induces RETNLA and serum amyloid A protein expression in macrophages. This chain is Interleukin-31 (Il31), found in Mus musculus (Mouse).